The chain runs to 125 residues: Small ribosomal subunit protein eS8 (125 aa).

The protein belongs to the eukaryotic ribosomal protein eS8 family. In terms of assembly, part of the 30S ribosomal subunit.

This is Small ribosomal subunit protein eS8 from Methanosarcina acetivorans (strain ATCC 35395 / DSM 2834 / JCM 12185 / C2A).